The chain runs to 35 residues: Potassium channel toxin alpha-KTx 6.12 (35 aa).

Glutamine 1 carries the post-translational modification Pyrrolidone carboxylic acid. 4 disulfides stabilise this stretch: cysteine 4/cysteine 24, cysteine 10/cysteine 29, cysteine 14/cysteine 31, and cysteine 19/cysteine 34. Lysine 35 carries the post-translational modification Lysine amide.

This sequence belongs to the short scorpion toxin superfamily. Potassium channel inhibitor family. Alpha-KTx 06 subfamily. Monomer. As to expression, expressed by the venom gland.

The protein localises to the secreted. High affinity blocker of Kv1.3/KCNA3 channels of human T cells. Blocks Kv1.2/KCNA2 with an order of magnitude smaller than for Kv1.3/KCNA3. This Anuroctonus phaiodactylus (Mafia scorpion) protein is Potassium channel toxin alpha-KTx 6.12.